Here is a 345-residue protein sequence, read N- to C-terminus: BAG family molecular chaperone regulator 1 (345 aa).

The interval 1-137 (MAQRGGARRP…STRSEEVTRE (137 aa)) is disordered. Positions 68 to 80 (RRPRMKKKTRRRS) are enriched in basic residues. The segment covering 81-91 (TRSEELTRSEE) has biased composition (basic and acidic residues). Residues 95–114 (SEEATWSEEATQSEEATQGE) are compositionally biased toward low complexity. 7 tandem repeats follow at residues 96 to 101 (EEATWS), 102 to 107 (EEATQS), 108 to 113 (EEATQG), 114 to 119 (EEMNRS), 120 to 125 (QEVTRD), 126 to 131 (EESTRS), and 132 to 137 (EEVTRE). The tract at residues 96–137 (EEATWSEEATQSEEATQGEEMNRSQEVTRDEESTRSEEVTRE) is 7 X 6 AA tandem repeat of E-E-X(4). Residues 115–137 (EMNRSQEVTRDEESTRSEEVTRE) are compositionally biased toward basic and acidic residues. In terms of domain architecture, Ubiquitin-like spans 144-224 (LTVTVTHSNE…VMLIGKKNSP (81 aa)). Positions 172–219 (DLAQVVEEVIGVPQSFQKLIFKGKSLKEMETPLSALGIQDGCRVMLIG) are interaction with HSPA8. Residues 216-345 (MLIGKKNSPQ…LQSTNFALAE (130 aa)) form an interaction with PPP1R15A region. Position 223 is a phosphoserine (Ser-223). One can recognise a BAG domain in the interval 246 to 326 (QLEELNKELT…AFLAECDTVE (81 aa)).

As to quaternary structure, homodimer. Forms a heteromeric complex with HSP70/HSC70. Binds to the ATPase domain of HSP/HSC70 chaperones. Isoform 1, isoform 3 and isoform 4 but not isoform 2 interact with HSPA8/HSC70. Interacts with NR3C1. Interacts with the N-terminal region of MAPRE2. Interacts with PPP1R15A. Interacts with BCL2 in an ATP-dependent manner. Isoform 2 does not interact with BCL2. Interacts with SIAH1. Interacts with HSPA8 (via NBD). Interacts with HSPA1A (via NBD) and HSPA1B (via NBD). Interacts with SIAH2. Interacts with ESR1; the interaction is promoted in the absence of estradiol (17-beta-estradiol/E2). Post-translationally, ubiquitinated; mediated by SIAH1 or SIAH2 and leading to its subsequent proteasomal degradation. In terms of tissue distribution, isoform 4 is the most abundantly expressed isoform. It is ubiquitously expressed throughout most tissues, except the liver, colon, breast and uterine myometrium. Isoform 1 is expressed in the ovary and testis. Isoform 4 is expressed in several types of tumor cell lines, and at consistently high levels in leukemia and lymphoma cell lines. Isoform 1 is expressed in the prostate, breast and leukemia cell lines. Isoform 3 is the least abundant isoform in tumor cell lines (at protein level).

It localises to the nucleus. The protein localises to the cytoplasm. In terms of biological role, co-chaperone for HSP70 and HSC70 chaperone proteins. Acts as a nucleotide-exchange factor (NEF) promoting the release of ADP from the HSP70 and HSC70 proteins thereby triggering client/substrate protein release. Nucleotide release is mediated via its binding to the nucleotide-binding domain (NBD) of HSPA8/HSC70 where as the substrate release is mediated via its binding to the substrate-binding domain (SBD) of HSPA8/HSC70. Inhibits the pro-apoptotic function of PPP1R15A, and has anti-apoptotic activity. Markedly increases the anti-cell death function of BCL2 induced by various stimuli. Involved in the STUB1-mediated proteasomal degradation of ESR1 in response to age-related circulating estradiol (17-beta-estradiol/E2) decline, thereby promotes neuronal apoptosis in response to ischemic reperfusion injury. In Homo sapiens (Human), this protein is BAG family molecular chaperone regulator 1 (BAG1).